A 425-amino-acid chain; its full sequence is Serine--tRNA ligase (425 aa).

An L-serine-binding site is contributed by 230–232 (TAE). 261-263 (RSE) serves as a coordination point for ATP. Glu-284 provides a ligand contact to L-serine. ATP is bound at residue 348–351 (EISS). Residue Ser-384 participates in L-serine binding.

The protein belongs to the class-II aminoacyl-tRNA synthetase family. Type-1 seryl-tRNA synthetase subfamily. As to quaternary structure, homodimer. The tRNA molecule binds across the dimer.

It is found in the cytoplasm. It catalyses the reaction tRNA(Ser) + L-serine + ATP = L-seryl-tRNA(Ser) + AMP + diphosphate + H(+). The enzyme catalyses tRNA(Sec) + L-serine + ATP = L-seryl-tRNA(Sec) + AMP + diphosphate + H(+). It participates in aminoacyl-tRNA biosynthesis; selenocysteinyl-tRNA(Sec) biosynthesis; L-seryl-tRNA(Sec) from L-serine and tRNA(Sec): step 1/1. In terms of biological role, catalyzes the attachment of serine to tRNA(Ser). Is also able to aminoacylate tRNA(Sec) with serine, to form the misacylated tRNA L-seryl-tRNA(Sec), which will be further converted into selenocysteinyl-tRNA(Sec). The protein is Serine--tRNA ligase of Streptococcus equi subsp. zooepidemicus (strain MGCS10565).